We begin with the raw amino-acid sequence, 236 residues long: Ribosome maturation protein SDO1 homolog (236 aa).

It belongs to the SDO1/SBDS family.

This is Ribosome maturation protein SDO1 homolog from Pyrococcus abyssi (strain GE5 / Orsay).